Consider the following 116-residue polypeptide: DNA-directed RNA polymerase subunit omega (116 aa).

The protein belongs to the RNA polymerase subunit omega family. As to quaternary structure, the RNAP catalytic core consists of 2 alpha, 1 beta, 1 beta' and 1 omega subunit. When a sigma factor is associated with the core the holoenzyme is formed, which can initiate transcription.

It catalyses the reaction RNA(n) + a ribonucleoside 5'-triphosphate = RNA(n+1) + diphosphate. Its function is as follows. Promotes RNA polymerase assembly. Latches the N- and C-terminal regions of the beta' subunit thereby facilitating its interaction with the beta and alpha subunits. The polypeptide is DNA-directed RNA polymerase subunit omega (Hyphomonas neptunium (strain ATCC 15444)).